Here is a 341-residue protein sequence, read N- to C-terminus: Nicotinate-nucleotide--dimethylbenzimidazole phosphoribosyltransferase (341 aa).

The active-site Proton acceptor is the E310.

It belongs to the CobT family.

It catalyses the reaction 5,6-dimethylbenzimidazole + nicotinate beta-D-ribonucleotide = alpha-ribazole 5'-phosphate + nicotinate + H(+). The protein operates within nucleoside biosynthesis; alpha-ribazole biosynthesis; alpha-ribazole from 5,6-dimethylbenzimidazole: step 1/2. In terms of biological role, catalyzes the synthesis of alpha-ribazole-5'-phosphate from nicotinate mononucleotide (NAMN) and 5,6-dimethylbenzimidazole (DMB). This chain is Nicotinate-nucleotide--dimethylbenzimidazole phosphoribosyltransferase, found in Vibrio cholerae serotype O1 (strain ATCC 39315 / El Tor Inaba N16961).